The sequence spans 283 residues: Aquaporin PIP2-5 (283 aa).

The next 2 helical transmembrane spans lie at 37–57 and 74–94; these read AVIA…ATVI and CGGV…FILV. The short motif at 106–108 is the NPA 1 element; that stretch reads NPA. Helical transmembrane passes span 125-145, 167-187, and 199-219; these read ILYI…VKGF, GTGL…VFSA, and VPVL…LATI. An NPA 2 motif is present at residues 227-229; it reads NPA. A helical transmembrane segment spans residues 249 to 269; the sequence is IFWVGPFIGAAIAALYHQIVL.

Belongs to the MIP/aquaporin (TC 1.A.8) family. PIP (TC 1.A.8.11) subfamily. Expressed in roots.

The protein resides in the cell membrane. In terms of biological role, water channel required to facilitate the transport of water across cell membrane. May play a role in root water uptake. In Oryza sativa subsp. japonica (Rice), this protein is Aquaporin PIP2-5 (PIP2-5).